Consider the following 154-residue polypeptide: Protein X (154 aa).

Residues proline 68–phenylalanine 117 are mitochondrial targeting sequence.

It belongs to the orthohepadnavirus protein X family. May form homodimer. May interact with host CEBPA, CFLAR, CREB1, DDB1, E4F1, HBXIP, HSPD1/HSP60, NFKBIA, POLR2E and SMAD4. Interacts with host SMC5-SMC6 complex and induces its degradation. Interacts with host TRPC4AP; leading to prevent ubiquitination of TRPC4AP. Interacts with host PLSCR1; this interaction promotes ubiquitination and degradation of HBx and impairs HBx-mediated cell proliferation. Post-translationally, a fraction may be phosphorylated in insect cells and HepG2 cells, a human hepatoblastoma cell line. Phosphorylated in vitro by host protein kinase C or mitogen-activated protein kinase. N-acetylated in insect cells.

The protein resides in the host cytoplasm. Its subcellular location is the host nucleus. It localises to the host mitochondrion. Functionally, multifunctional protein that plays a role in silencing host antiviral defenses and promoting viral transcription. Does not seem to be essential for HBV infection. May be directly involved in development of cirrhosis and liver cancer (hepatocellular carcinoma). Most of cytosolic activities involve modulation of cytosolic calcium. The effect on apoptosis is controversial depending on the cell types in which the studies have been conducted. May induce apoptosis by localizing in mitochondria and causing loss of mitochondrial membrane potential. May also modulate apoptosis by binding host CFLAR, a key regulator of the death-inducing signaling complex (DISC). Promotes viral transcription by using the host E3 ubiquitin ligase DDB1 to target the SMC5-SMC6 complex to proteasomal degradation. This host complex would otherwise bind to viral episomal DNA, and prevents its transcription. Moderately stimulates transcription of many different viral and cellular transcription elements. Promoters and enhancers stimulated by HBx contain DNA binding sites for NF-kappa-B, AP-1, AP-2, c-EBP, ATF/CREB, or the calcium-activated factor NF-AT. This chain is Protein X, found in Orangutan hepatitis B virus (isolate Somad) (HBVoru).